Consider the following 174-residue polypeptide: Large ribosomal subunit protein uL10 (174 aa).

It belongs to the universal ribosomal protein uL10 family. In terms of assembly, part of the ribosomal stalk of the 50S ribosomal subunit. The N-terminus interacts with L11 and the large rRNA to form the base of the stalk. The C-terminus forms an elongated spine to which L12 dimers bind in a sequential fashion forming a multimeric L10(L12)X complex.

Functionally, forms part of the ribosomal stalk, playing a central role in the interaction of the ribosome with GTP-bound translation factors. The chain is Large ribosomal subunit protein uL10 from Verminephrobacter eiseniae (strain EF01-2).